The following is a 1402-amino-acid chain: Transcription factor SPT20 homolog (1402 aa).

Disordered stretches follow at residues 1–29, 60–107, 114–133, 177–206, 786–817, 1136–1174, and 1199–1250; these read MNGN…EQEQ, VNSL…LDTD, NNDS…SSSS, QTTL…NNIL, APST…PTPV, PQQI…QYQT, and QPLQ…PPQI. Over residues 7–29 the composition is skewed to basic and acidic residues; it reads VHTEENKNEHQQEGKGGEQEQEQ. The span at 60–72 shows a compositional bias: polar residues; it reads VNSLSEPTPNEQQ. Residues 73–102 show a composition bias toward low complexity; that stretch reads NNNNNNNSNGNGNGNDETTSSKTTTIINSN. 6 stretches are compositionally biased toward low complexity: residues 183 to 204, 786 to 812, 1136 to 1150, 1157 to 1174, 1199 to 1218, and 1226 to 1250; these read NNNN…NNNN, APST…TTPT, PQQI…PPNQ, SPQS…QYQT, QPLQ…QQQQ, and PQQF…PPQI.

It belongs to the SPT20 family.

In Dictyostelium discoideum (Social amoeba), this protein is Transcription factor SPT20 homolog.